Here is a 235-residue protein sequence, read N- to C-terminus: Large ribosomal subunit protein uL1 (235 aa).

It belongs to the universal ribosomal protein uL1 family. In terms of assembly, part of the 50S ribosomal subunit.

Binds directly to 23S rRNA. The L1 stalk is quite mobile in the ribosome, and is involved in E site tRNA release. Functionally, protein L1 is also a translational repressor protein, it controls the translation of the L11 operon by binding to its mRNA. This chain is Large ribosomal subunit protein uL1, found in Paenarthrobacter aurescens (strain TC1).